Here is a 141-residue protein sequence, read N- to C-terminus: ATP synthase epsilon chain (141 aa).

Belongs to the ATPase epsilon chain family. F-type ATPases have 2 components, CF(1) - the catalytic core - and CF(0) - the membrane proton channel. CF(1) has five subunits: alpha(3), beta(3), gamma(1), delta(1), epsilon(1). CF(0) has three main subunits: a, b and c.

It localises to the cell inner membrane. Its function is as follows. Produces ATP from ADP in the presence of a proton gradient across the membrane. The protein is ATP synthase epsilon chain of Azoarcus sp. (strain BH72).